The chain runs to 359 residues: Protein RecA (359 aa).

An ATP-binding site is contributed by 74 to 81 (GPESSGKT).

Belongs to the RecA family.

It is found in the cytoplasm. In terms of biological role, can catalyze the hydrolysis of ATP in the presence of single-stranded DNA, the ATP-dependent uptake of single-stranded DNA by duplex DNA, and the ATP-dependent hybridization of homologous single-stranded DNAs. It interacts with LexA causing its activation and leading to its autocatalytic cleavage. The polypeptide is Protein RecA (Anaplasma marginale (strain Florida)).